Here is a 151-residue protein sequence, read N- to C-terminus: Cytochrome c-type biogenesis protein CcmE (151 aa).

Residues 1–8 (MNPQRKKR) are Cytoplasmic-facing. Residues 9 to 29 (LFLILGLLAGVAVAVGFALSA) traverse the membrane as a helical; Signal-anchor for type II membrane protein segment. Residues 30–151 (LQQNINLFYT…QAASGAEAKP (122 aa)) are Periplasmic-facing. Heme contacts are provided by H124 and Y128.

This sequence belongs to the CcmE/CycJ family.

It localises to the cell inner membrane. Functionally, heme chaperone required for the biogenesis of c-type cytochromes. Transiently binds heme delivered by CcmC and transfers the heme to apo-cytochromes in a process facilitated by CcmF and CcmH. The polypeptide is Cytochrome c-type biogenesis protein CcmE (Pseudomonas putida (strain W619)).